Here is a 150-residue protein sequence, read N- to C-terminus: Phosphoribosyl-AMP cyclohydrolase (150 aa).

D92 serves as a coordination point for Mg(2+). C93 serves as a coordination point for Zn(2+). Mg(2+) contacts are provided by D94 and D96. Zn(2+) is bound by residues C111 and C118.

Belongs to the PRA-CH family. Homodimer. Mg(2+) serves as cofactor. The cofactor is Zn(2+).

Its subcellular location is the cytoplasm. It carries out the reaction 1-(5-phospho-beta-D-ribosyl)-5'-AMP + H2O = 1-(5-phospho-beta-D-ribosyl)-5-[(5-phospho-beta-D-ribosylamino)methylideneamino]imidazole-4-carboxamide. It participates in amino-acid biosynthesis; L-histidine biosynthesis; L-histidine from 5-phospho-alpha-D-ribose 1-diphosphate: step 3/9. Functionally, catalyzes the hydrolysis of the adenine ring of phosphoribosyl-AMP. The protein is Phosphoribosyl-AMP cyclohydrolase of Agrobacterium fabrum (strain C58 / ATCC 33970) (Agrobacterium tumefaciens (strain C58)).